We begin with the raw amino-acid sequence, 244 residues long: tRNA pseudouridine synthase A (244 aa).

Aspartate 52 functions as the Nucleophile in the catalytic mechanism. Tyrosine 110 lines the substrate pocket.

It belongs to the tRNA pseudouridine synthase TruA family. Homodimer.

It catalyses the reaction uridine(38/39/40) in tRNA = pseudouridine(38/39/40) in tRNA. Formation of pseudouridine at positions 38, 39 and 40 in the anticodon stem and loop of transfer RNAs. This chain is tRNA pseudouridine synthase A, found in Pelobacter propionicus (strain DSM 2379 / NBRC 103807 / OttBd1).